The following is a 178-amino-acid chain: Probable inosine/xanthosine triphosphatase (178 aa).

This sequence belongs to the YjjX NTPase family. Homodimer. Requires Mg(2+) as cofactor. Mn(2+) is required as a cofactor.

The enzyme catalyses XTP + H2O = XDP + phosphate + H(+). It catalyses the reaction ITP + H2O = IDP + phosphate + H(+). Phosphatase that hydrolyzes non-canonical purine nucleotides such as XTP and ITP to their respective diphosphate derivatives. Probably excludes non-canonical purines from DNA/RNA precursor pool, thus preventing their incorporation into DNA/RNA and avoiding chromosomal lesions. The chain is Probable inosine/xanthosine triphosphatase from Pyrobaculum calidifontis (strain DSM 21063 / JCM 11548 / VA1).